The chain runs to 175 residues: Large ribosomal subunit protein uL18 (175 aa).

The protein belongs to the universal ribosomal protein uL18 family. In terms of assembly, part of the 50S ribosomal subunit. Contacts the 5S and 23S rRNAs.

Its function is as follows. This is one of the proteins that bind and probably mediate the attachment of the 5S RNA into the large ribosomal subunit, where it forms part of the central protuberance. The protein is Large ribosomal subunit protein uL18 of Methanosphaerula palustris (strain ATCC BAA-1556 / DSM 19958 / E1-9c).